The chain runs to 798 residues: General transcription and DNA repair factor IIH helicase/translocase subunit XPB (798 aa).

2 disordered regions span residues 1-62 and 235-254; these read MGPP…EQIN and PPGA…GADG. The short motif at 6-22 is the Nuclear localization signal element; it reads KSRKDRSGGDKFGKKRR. A compositionally biased stretch (basic and acidic residues) spans 10-25; it reads DRSGGDKFGKKRRAED. The span at 33 to 42 shows a compositional bias: acidic residues; that stretch reads DDNDSLDATE. A Helicase ATP-binding domain is found at 343 to 504; that stretch reads MFGNGRARSG…DLNFLIGPKL (162 aa). 360–367 contacts ATP; sequence AGKSLVGV. Residues 457 to 460 carry the DEVH box motif; sequence DEVH. The 156-residue stretch at 558–713 folds into the Helicase C-terminal domain; the sequence is RSCQFLIKYH…KVITHLKGMD (156 aa). A disordered region spans residues 746–765; it reads LPGEPGYRPSGSGGAVRRVG.

It belongs to the helicase family. RAD25/XPB subfamily. As to quaternary structure, component of the 7-subunit TFIIH core complex composed of haywire/XPB/ERCC3, XPD/ERCC2, GTF2H1, GTF2H2, GTF2H3, GTF2H4 and GTF2H5, which is active in NER. The core complex associates with the 3-subunit CDK-activating kinase (CAK) module composed of CCNH/cyclin H, CDK7 and MNAT1 to form the 10-subunit holoenzyme (holo-TFIIH) active in transcription. Interacts with PUF60. Interacts with ATF7IP. Interacts with Epstein-Barr virus EBNA2.

It localises to the nucleus. It catalyses the reaction Couples ATP hydrolysis with the unwinding of duplex DNA by translocating in the 3'-5' direction.. The catalysed reaction is ATP + H2O = ADP + phosphate + H(+). Functionally, ATP-dependent 3'-5' DNA helicase/translocase; binds dsDNA rather than ssDNA, unzipping it in a translocase rather than classical helicase activity. Component of the general transcription and DNA repair factor IIH (TFIIH) core complex. When complexed to CDK-activating kinase (CAK), involved in RNA transcription by RNA polymerase II. The ATPase activity of XPB/ERCC3, but not its helicase activity, is required for DNA opening; it may wrap around the damaged DNA wedging it open, causing localized melting and twisting that allows XPD/ERCC2 helicase to anchor. The ATP-dependent helicase activity of XPB/ERCC3 may be required for promoter escape. Also involved in transcription-coupled nucleotide excision repair (NER) of damaged DNA. In NER, TFIIH acts by opening DNA around the lesion to allow the excision of the damaged oligonucleotide and its replacement by a new DNA fragment. The structure of the TFIIH transcription complex differs from the NER-TFIIH complex; large movements by XPD/ERCC2 and XPB/ERCC3 are stabilized by XPA. The sequence is that of General transcription and DNA repair factor IIH helicase/translocase subunit XPB (hay) from Drosophila melanogaster (Fruit fly).